A 526-amino-acid polypeptide reads, in one-letter code: Delayed-rectifier potassium channel regulatory subunit KCNS1 (526 aa).

At 1 to 217 (MLMLLVRGTH…LTMENPGYSL (217 aa)) the chain is on the cytoplasmic side. The helical transmembrane segment at 218-239 (PSKLFSCVSISVVLASIAAMCI) threads the bilayer. The Extracellular portion of the chain corresponds to 240–270 (HSLPEYQAREAAAAVAAVAAGRSPEGVRDDP). The helical transmembrane segment at 271 to 293 (VLRRLEYFCIAWFSFEVSSRLLL) threads the bilayer. At 294–304 (APSTRNFFCHP) the chain is on the cytoplasmic side. The chain crosses the membrane as a helical span at residues 305–322 (LNLIDIVSVLPFYLTLLA). At 323-337 (GVALGDQGGKEFGHL) the chain is on the extracellular side. The helical; Voltage-sensor transmembrane segment at 338 to 358 (GKVVQVFRLMRIFRVLKLARH) threads the bilayer. Over 359–373 (STGLRSLGATLKHSY) the chain is Cytoplasmic. Residues 374–395 (REVGILLLYLAVGVSVFSGVAY) form a helical membrane-spanning segment. Residues 396–408 (TAEKEEDVGFNTI) are Extracellular-facing. The helical intramembrane region spans 409–420 (PACWWWGTVSMT). The short motif at 421-426 (TVGYGD) is the Selectivity filter element. The stretch at 421–428 (TVGYGDVV) is an intramembrane region. The Extracellular portion of the chain corresponds to 429–435 (PVTVAGK). Residues 436-464 (LAASGCILGGILVVALPITIIFNKFSHFY) form a helical membrane-spanning segment. Residues 465–526 (RRQKALEAAV…PSEPPHPQRY (62 aa)) are Cytoplasmic-facing. Positions 492 to 526 (VSEASLETSGETSQEGRSADLESQAPSEPPHPQRY) are disordered. The span at 496–507 (SLETSGETSQEG) shows a compositional bias: polar residues.

The protein belongs to the potassium channel family. S (TC 1.A.1.2) subfamily. Kv9.1/KCNS1 sub-subfamily. Heterotetramer with KCNB1. Heterotetramer with KCNB2. Does not form homomultimers.

The protein localises to the cell membrane. Functionally, potassium channel regulatory subunit that modulate the delayed rectifier voltage-gated potassium channel activity of KCNB1 and KCNB2 by altering their kinetics, expression levels, and shifting the half-inactivation potential to more polarized values. While it does not form functional channels on its own, it can form functional heterotetrameric channels with KCNB1 and KCNB2. Each regulatory subunit has unique regulatory properties that can lead to extensive inhibition, significant changes in kinetics, and/or substantial shifts in the voltage dependencies of the inactivation process. The sequence is that of Delayed-rectifier potassium channel regulatory subunit KCNS1 from Gorilla gorilla gorilla (Western lowland gorilla).